A 380-amino-acid chain; its full sequence is Cytochrome b (380 aa).

The next 4 membrane-spanning stretches (helical) occupy residues 34–54 (FGWL…FLAM), 78–99 (WLLR…YFHI), 114–134 (WNIG…GYVL), and 179–199 (FFTF…IHLL). Heme b is bound by residues histidine 84 and histidine 98. Residues histidine 183 and histidine 197 each coordinate heme b. Histidine 202 is a binding site for a ubiquinone. Helical transmembrane passes span 227-247 (FKDL…STFA), 289-309 (LGGV…PIIH), 321-341 (AAKA…WIGG), and 348-368 (FISI…LIIP).

It belongs to the cytochrome b family. As to quaternary structure, the cytochrome bc1 complex contains 3 respiratory subunits (MT-CYB, CYC1 and UQCRFS1), 2 core proteins (UQCRC1 and UQCRC2) and probably 6 low-molecular weight proteins. Heme b is required as a cofactor.

Its subcellular location is the mitochondrion inner membrane. Component of the ubiquinol-cytochrome c reductase complex (complex III or cytochrome b-c1 complex) that is part of the mitochondrial respiratory chain. The b-c1 complex mediates electron transfer from ubiquinol to cytochrome c. Contributes to the generation of a proton gradient across the mitochondrial membrane that is then used for ATP synthesis. The polypeptide is Cytochrome b (mt-cyb) (Rana dybowskii (Dybovsky's frog)).